The sequence spans 120 residues: Photosystem II extrinsic protein U (120 aa).

Positions 1-29 (MKRLLSLLTGVLVMTGLLMALIFPQSAYA) are cleaved as a signal peptide.

It belongs to the PsbU family. As to quaternary structure, PSII is composed of 1 copy each of membrane proteins PsbA, PsbB, PsbC, PsbD, PsbE, PsbF, PsbH, PsbI, PsbJ, PsbK, PsbL, PsbM, PsbT, PsbX, PsbY, Psb30/Ycf12, peripheral proteins PsbO, CyanoQ (PsbQ), PsbU, PsbV and a large number of cofactors. It forms dimeric complexes.

Its subcellular location is the cellular thylakoid membrane. Its function is as follows. One of the extrinsic, lumenal subunits of photosystem II (PSII). PSII is a light-driven water plastoquinone oxidoreductase, using light energy to abstract electrons from H(2)O, generating a proton gradient subsequently used for ATP formation. The extrinsic proteins stabilize the structure of photosystem II oxygen-evolving complex (OEC), the ion environment of oxygen evolution and protect the OEC against heat-induced inactivation. The polypeptide is Photosystem II extrinsic protein U (Prochlorococcus marinus (strain MIT 9313)).